An 82-amino-acid polypeptide reads, in one-letter code: Small ribosomal subunit protein bS16 (82 aa).

It belongs to the bacterial ribosomal protein bS16 family.

This chain is Small ribosomal subunit protein bS16, found in Shigella boydii serotype 18 (strain CDC 3083-94 / BS512).